The chain runs to 349 residues: MEPTSGFAEQPGPEKVESEEQEPAQWQALPVLSEQQSGAVELVLAYAAPVLDKRQTSRLLREVSAVYPLPAQPHLKRVRPSRSAGGAHSSDLLLCLAGPSAGPRSLAELLPRPAVDPRGLGTPFLVPVPARPPLTRSQFEEARAHWPTSFHEDKQVTSALAGQLFSAQARAAMQTHMERAVRAAQRAAAQGLRAVGAVVVDPASDHVLATGHDCCSEASPLLHAVMVCIDLVAQGQGRGSCDLRRHPACSFTQATATQSARAGSVRKLDEDSLPYVCTGYDLYVTREPCVMCAMALVHARIQRVFYGAPSPDGALGTRFRVHARPDLNHRFQVFRGILEDQCRQLDPDP.

M1 bears the N-acetylmethionine mark. The interval 1 to 25 (MEPTSGFAEQPGPEKVESEEQEPAQ) is disordered. Residues 171–334 (AAMQTHMERA…PDLNHRFQVF (164 aa)) enclose the CMP/dCMP-type deaminase domain. Positions 223, 289, and 292 each coordinate Zn(2+).

The protein belongs to the cytidine and deoxycytidylate deaminase family. ADAT3 subfamily. The cofactor is Zn(2+).

This chain is Probable inactive tRNA-specific adenosine deaminase-like protein 3 (Adat3), found in Rattus norvegicus (Rat).